A 72-amino-acid chain; its full sequence is Antimicrobial peptide MeuNaTxbeta-4 (72 aa).

Residues 1–5 (LIGVK) form the signal peptide. The 63-residue stretch at 7-69 (EHGYLLDKYT…LWHYETNKCN (63 aa)) folds into the LCN-type CS-alpha/beta domain. Disulfide bonds link Cys-18–Cys-68, Cys-22–Cys-43, Cys-29–Cys-50, and Cys-33–Cys-52.

Expressed by the venom gland.

Its subcellular location is the secreted. In terms of biological role, antimicrobial peptide with weak activity against both Gram-positive and -negative bacteria. Its antibiotic activity is potentiated by other antibacterial peptides such as Meucin-49. This Mesobuthus eupeus (Lesser Asian scorpion) protein is Antimicrobial peptide MeuNaTxbeta-4.